Reading from the N-terminus, the 299-residue chain is AUGMIN subunit 1 (299 aa).

S2 is subject to N-acetylserine. Coiled coils occupy residues R76–A96 and R164–V184.

Belongs to the HAUS1 family. Part of the augmin complex composed of 8 subunits. The complex acts on microtubules and interacts with gamma-tubulin in spindles and the phragmoplast. Interacts with AUG3.

Its subcellular location is the cytoplasm. It is found in the cytoskeleton. The protein resides in the spindle. It localises to the phragmoplast. Its function is as follows. Involved in microtubules reorganization during spindle and phragmoplast development. This Arabidopsis thaliana (Mouse-ear cress) protein is AUGMIN subunit 1.